We begin with the raw amino-acid sequence, 370 residues long: GTPase Obg (370 aa).

The region spanning 1 to 159 (MKFIDEARIE…RMLRLELKVL (159 aa)) is the Obg domain. Positions 127-146 (NLHFKSSTNRAPRQKTDGKP) are disordered. Residues 160–334 (ADVGLLGMPN…LCYAIYDYLA (175 aa)) enclose the OBG-type G domain. Residues 166–173 (GMPNAGKS), 191–195 (FTTLA), 213–216 (DIPG), 284–287 (NKLD), and 315–317 (SAL) each bind GTP. Residues serine 173 and threonine 193 each coordinate Mg(2+).

The protein belongs to the TRAFAC class OBG-HflX-like GTPase superfamily. OBG GTPase family. Monomer. It depends on Mg(2+) as a cofactor.

The protein resides in the cytoplasm. Its function is as follows. An essential GTPase which binds GTP, GDP and possibly (p)ppGpp with moderate affinity, with high nucleotide exchange rates and a fairly low GTP hydrolysis rate. Plays a role in control of the cell cycle, stress response, ribosome biogenesis and in those bacteria that undergo differentiation, in morphogenesis control. The sequence is that of GTPase Obg from Burkholderia lata (strain ATCC 17760 / DSM 23089 / LMG 22485 / NCIMB 9086 / R18194 / 383).